A 73-amino-acid chain; its full sequence is uncharacterized protein (73 aa).

This is an uncharacterized protein from Saccharolobus islandicus (Sulfolobus islandicus).